A 239-amino-acid polypeptide reads, in one-letter code: O-antigen export system ATP-binding protein RfbE (239 aa).

The ABC transporter domain maps to 28–239; the sequence is VRVSTGGRIG…LIYEESMDIL (212 aa). 66–73 is a binding site for ATP; that stretch reads GHNGAGKS.

The protein belongs to the ABC transporter superfamily.

It localises to the cell inner membrane. In terms of biological role, may form an ATP-driven O-antigen export apparatus, in association with RfbD. This chain is O-antigen export system ATP-binding protein RfbE (rfbE), found in Yersinia enterocolitica.